A 209-amino-acid polypeptide reads, in one-letter code: MSVQVKLTKNSFRLEKQKLARLQTYLPTLKLKKALLQAEVQNAVKDAAECDKDYVQAYERIYAFAELFSIPLCTDCVEKSFEIQSIDNDFENIAGVEVPIVREVTLFPASYSLLGTPIWLDTMLSASKELVVKKVMAEVSKERLKILEEELRAVSIRVNLFEKKLIPETTKILKKIAVFLSDRSITDVGQVKMAKKKIELRKARGDECV.

It belongs to the V-ATPase D subunit family.

In terms of biological role, produces ATP from ADP in the presence of a proton gradient across the membrane. The sequence is that of V-type ATP synthase subunit D (atpD) from Chlamydia pneumoniae (Chlamydophila pneumoniae).